The chain runs to 414 residues: Histidine--tRNA ligase (414 aa).

It belongs to the class-II aminoacyl-tRNA synthetase family. Homodimer.

It is found in the cytoplasm. The enzyme catalyses tRNA(His) + L-histidine + ATP = L-histidyl-tRNA(His) + AMP + diphosphate + H(+). The protein is Histidine--tRNA ligase of Mycoplasma mycoides subsp. mycoides SC (strain CCUG 32753 / NCTC 10114 / PG1).